Consider the following 223-residue polypeptide: Probable chemoreceptor glutamine deamidase CheD (223 aa).

Residues 189-223 (QTASAKAHTPPQIERFSAPAKPRFERFTRPSTATS) are disordered.

This sequence belongs to the CheD family.

The catalysed reaction is L-glutaminyl-[protein] + H2O = L-glutamyl-[protein] + NH4(+). Functionally, probably deamidates glutamine residues to glutamate on methyl-accepting chemotaxis receptors (MCPs), playing an important role in chemotaxis. This is Probable chemoreceptor glutamine deamidase CheD from Bordetella petrii (strain ATCC BAA-461 / DSM 12804 / CCUG 43448).